We begin with the raw amino-acid sequence, 393 residues long: NAD(P)H-quinone oxidoreductase subunit H, chloroplastic (393 aa).

It belongs to the complex I 49 kDa subunit family. As to quaternary structure, NDH is composed of at least 16 different subunits, 5 of which are encoded in the nucleus. Interacts with the chaperonin CNP60B4 subunit.

It is found in the plastid. The protein localises to the chloroplast thylakoid membrane. The catalysed reaction is a plastoquinone + NADH + (n+1) H(+)(in) = a plastoquinol + NAD(+) + n H(+)(out). It carries out the reaction a plastoquinone + NADPH + (n+1) H(+)(in) = a plastoquinol + NADP(+) + n H(+)(out). Its function is as follows. NDH shuttles electrons from NAD(P)H:plastoquinone, via FMN and iron-sulfur (Fe-S) centers, to quinones in the photosynthetic chain and possibly in a chloroplast respiratory chain. The immediate electron acceptor for the enzyme in this species is believed to be plastoquinone. Couples the redox reaction to proton translocation, and thus conserves the redox energy in a proton gradient. This Arabidopsis thaliana (Mouse-ear cress) protein is NAD(P)H-quinone oxidoreductase subunit H, chloroplastic.